Reading from the N-terminus, the 166-residue chain is Interferon gamma (166 aa).

The N-terminal stretch at 1–23 is a signal peptide; that stretch reads MNYTSYILAFQLCVILCSSGCNC. Residue glutamine 24 is modified to Pyrrolidone carboxylic acid. Asparagine 39 and asparagine 106 each carry an N-linked (GlcNAc...) asparagine glycan.

Belongs to the type II (or gamma) interferon family. Homodimer. Interacts with IFNGR1 (via extracellular domain); this interaction promotes IFNGR1 dimerization. Released primarily from activated T lymphocytes.

The protein localises to the secreted. Type II interferon produced by immune cells such as T-cells and NK cells that plays crucial roles in antimicrobial, antiviral, and antitumor responses by activating effector immune cells and enhancing antigen presentation. Primarily signals through the JAK-STAT pathway after interaction with its receptor IFNGR1 to affect gene regulation. Upon IFNG binding, IFNGR1 intracellular domain opens out to allow association of downstream signaling components JAK2, JAK1 and STAT1, leading to STAT1 activation, nuclear translocation and transcription of IFNG-regulated genes. Many of the induced genes are transcription factors such as IRF1 that are able to further drive regulation of a next wave of transcription. Plays a role in class I antigen presentation pathway by inducing a replacement of catalytic proteasome subunits with immunoproteasome subunits. In turn, increases the quantity, quality, and repertoire of peptides for class I MHC loading. Increases the efficiency of peptide generation also by inducing the expression of activator PA28 that associates with the proteasome and alters its proteolytic cleavage preference. Up-regulates as well MHC II complexes on the cell surface by promoting expression of several key molecules such as cathepsins B/CTSB, H/CTSH, and L/CTSL. Participates in the regulation of hematopoietic stem cells during development and under homeostatic conditions by affecting their development, quiescence, and differentiation. The sequence is that of Interferon gamma (IFNG) from Canis lupus familiaris (Dog).